Reading from the N-terminus, the 192-residue chain is Large ribosomal subunit protein uL5 (192 aa).

It belongs to the universal ribosomal protein uL5 family. As to quaternary structure, part of the 50S ribosomal subunit; contacts the 5S rRNA and probably tRNA. Forms a bridge to the 30S subunit in the 70S ribosome.

Functionally, this is one of the proteins that bind and probably mediate the attachment of the 5S RNA into the large ribosomal subunit, where it forms part of the central protuberance. In the 70S ribosome it contacts protein S13 of the 30S subunit (bridge B1b), connecting the 2 subunits; this bridge is implicated in subunit movement. May contact the P site tRNA; the 5S rRNA and some of its associated proteins might help stabilize positioning of ribosome-bound tRNAs. This Aeropyrum pernix (strain ATCC 700893 / DSM 11879 / JCM 9820 / NBRC 100138 / K1) protein is Large ribosomal subunit protein uL5.